The following is a 165-amino-acid chain: MDIAHDLQSIGAQEQALVFPHFDPARAWALGNRMHALATSRGHAIAIDIATFGQPLFYAALAGATPDNADWVRRKRNVVAHFRRSSYAIGLRMQQAGATLADKHGLPVAEYASHGGSFPLTVAGAGVIGSITASGLPQRADHEFVVEALCAELGHDYAVLALARS.

It belongs to the UPF0303 family.

This Burkholderia cenocepacia (strain ATCC BAA-245 / DSM 16553 / LMG 16656 / NCTC 13227 / J2315 / CF5610) (Burkholderia cepacia (strain J2315)) protein is UPF0303 protein BceJ2315_15790.